The following is a 250-amino-acid chain: 5-oxoprolinase subunit A (250 aa).

This sequence belongs to the LamB/PxpA family. In terms of assembly, forms a complex composed of PxpA, PxpB and PxpC.

The catalysed reaction is 5-oxo-L-proline + ATP + 2 H2O = L-glutamate + ADP + phosphate + H(+). Catalyzes the cleavage of 5-oxoproline to form L-glutamate coupled to the hydrolysis of ATP to ADP and inorganic phosphate. The chain is 5-oxoprolinase subunit A from Chromohalobacter salexigens (strain ATCC BAA-138 / DSM 3043 / CIP 106854 / NCIMB 13768 / 1H11).